A 258-amino-acid chain; its full sequence is UPF0246 protein VP0504 (258 aa).

This sequence belongs to the UPF0246 family.

This chain is UPF0246 protein VP0504, found in Vibrio parahaemolyticus serotype O3:K6 (strain RIMD 2210633).